Here is a 192-residue protein sequence, read N- to C-terminus: NAD(P)H-quinone oxidoreductase subunit J, organellar chromatophore (192 aa).

It belongs to the complex I 30 kDa subunit family. In terms of assembly, NDH is composed of at least 16 different subunits, 5 of which are encoded in the nucleus.

It is found in the plastid. The protein localises to the organellar chromatophore thylakoid membrane. The catalysed reaction is a quinone + NADH + H(+) = a quinol + NAD(+). Functionally, NDH-1 shuttles electrons from NADH, via FMN and iron-sulfur (Fe-S) centers, to quinones in the respiratory chain. Couples the redox reaction to proton translocation (for every two electrons transferred, four hydrogen ions are translocated across the cytoplasmic membrane), and thus conserves the redox energy in a proton gradient. The chain is NAD(P)H-quinone oxidoreductase subunit J, organellar chromatophore from Paulinella chromatophora.